Reading from the N-terminus, the 267-residue chain is NAD kinase 1 (267 aa).

The Proton acceptor role is filled by Asp45. NAD(+)-binding positions include 45–46 (DG), 122–123 (NE), Arg149, Asp151, and Ala186.

This sequence belongs to the NAD kinase family. The cofactor is a divalent metal cation.

It localises to the cytoplasm. It catalyses the reaction NAD(+) + ATP = ADP + NADP(+) + H(+). Its function is as follows. Involved in the regulation of the intracellular balance of NAD and NADP, and is a key enzyme in the biosynthesis of NADP. Catalyzes specifically the phosphorylation on 2'-hydroxyl of the adenosine moiety of NAD to yield NADP. In Oceanobacillus iheyensis (strain DSM 14371 / CIP 107618 / JCM 11309 / KCTC 3954 / HTE831), this protein is NAD kinase 1.